The chain runs to 277 residues: Thiamine thiazole synthase (277 aa).

Residues serine 36, glycine 63, valine 126, and 152–154 (HVD) each bind NAD(+). Fe cation is bound by residues aspartate 154 and histidine 169. Residue methionine 230 participates in NAD(+) binding. Arginine 240 provides a ligand contact to glycine.

Belongs to the THI4 family. As to quaternary structure, homooctamer; tetramer of dimers. Requires Fe(2+) as cofactor.

The catalysed reaction is hydrogen sulfide + glycine + NAD(+) = ADP-5-ethyl-4-methylthiazole-2-carboxylate + nicotinamide + 3 H2O + H(+). It participates in cofactor biosynthesis; thiamine diphosphate biosynthesis. Involved in the biosynthesis of the thiazole moiety of thiamine. Catalyzes the conversion of NAD and glycine to adenosine diphosphate 5-(2-hydroxyethyl)-4-methylthiazole-2-carboxylate (ADT), an adenylated thiazole intermediate, using free sulfide as a source of sulfur. This chain is Thiamine thiazole synthase, found in Fervidobacterium nodosum (strain ATCC 35602 / DSM 5306 / Rt17-B1).